The primary structure comprises 94 residues: uncharacterized protein (94 aa).

This sequence belongs to the phD/YefM antitoxin family.

This is an uncharacterized protein from Synechocystis sp. (strain ATCC 27184 / PCC 6803 / Kazusa).